The chain runs to 203 residues: ATP-dependent Clp protease proteolytic subunit (203 aa).

The active-site Nucleophile is Ser107. The active site involves His132.

It belongs to the peptidase S14 family. As to quaternary structure, fourteen ClpP subunits assemble into 2 heptameric rings which stack back to back to give a disk-like structure with a central cavity, resembling the structure of eukaryotic proteasomes.

It localises to the cytoplasm. The enzyme catalyses Hydrolysis of proteins to small peptides in the presence of ATP and magnesium. alpha-casein is the usual test substrate. In the absence of ATP, only oligopeptides shorter than five residues are hydrolyzed (such as succinyl-Leu-Tyr-|-NHMec, and Leu-Tyr-Leu-|-Tyr-Trp, in which cleavage of the -Tyr-|-Leu- and -Tyr-|-Trp bonds also occurs).. Functionally, cleaves peptides in various proteins in a process that requires ATP hydrolysis. Has a chymotrypsin-like activity. Plays a major role in the degradation of misfolded proteins. This chain is ATP-dependent Clp protease proteolytic subunit, found in Shewanella loihica (strain ATCC BAA-1088 / PV-4).